The chain runs to 179 residues: Cell division protein SepF (179 aa).

Residues 22–53 (LPYEKRDEPVFTPVNSSQEPALPMNQPSQSVG) are disordered. A compositionally biased stretch (polar residues) spans 34–53 (PVNSSQEPALPMNQPSQSVG).

This sequence belongs to the SepF family. In terms of assembly, homodimer. Interacts with FtsZ.

Its subcellular location is the cytoplasm. Cell division protein that is part of the divisome complex and is recruited early to the Z-ring. Probably stimulates Z-ring formation, perhaps through the cross-linking of FtsZ protofilaments. Its function overlaps with FtsA. This is Cell division protein SepF from Streptococcus pneumoniae (strain P1031).